Reading from the N-terminus, the 410-residue chain is Bifunctional enzyme IspD/IspF (410 aa).

A 2-C-methyl-D-erythritol 4-phosphate cytidylyltransferase region spans residues 1–257 (MSHDPVVPSA…AGAGSASSRL (257 aa)). Positions 258–410 (RSGIGTDVHA…AVATALVERL (153 aa)) are 2-C-methyl-D-erythritol 2,4-cyclodiphosphate synthase. Asp264 and His266 together coordinate a divalent metal cation. 4-CDP-2-C-methyl-D-erythritol 2-phosphate is bound by residues 264-266 (DVH) and 290-291 (HS). His298 contacts a divalent metal cation. Residues 312–314 (DIG), 385–388 (TTTD), Phe392, and Arg395 each bind 4-CDP-2-C-methyl-D-erythritol 2-phosphate.

This sequence in the N-terminal section; belongs to the IspD/TarI cytidylyltransferase family. IspD subfamily. It in the C-terminal section; belongs to the IspF family. Requires a divalent metal cation as cofactor.

The catalysed reaction is 2-C-methyl-D-erythritol 4-phosphate + CTP + H(+) = 4-CDP-2-C-methyl-D-erythritol + diphosphate. The enzyme catalyses 4-CDP-2-C-methyl-D-erythritol 2-phosphate = 2-C-methyl-D-erythritol 2,4-cyclic diphosphate + CMP. It participates in isoprenoid biosynthesis; isopentenyl diphosphate biosynthesis via DXP pathway; isopentenyl diphosphate from 1-deoxy-D-xylulose 5-phosphate: step 2/6. Its pathway is isoprenoid biosynthesis; isopentenyl diphosphate biosynthesis via DXP pathway; isopentenyl diphosphate from 1-deoxy-D-xylulose 5-phosphate: step 4/6. In terms of biological role, bifunctional enzyme that catalyzes the formation of 4-diphosphocytidyl-2-C-methyl-D-erythritol from CTP and 2-C-methyl-D-erythritol 4-phosphate (MEP) (IspD), and catalyzes the conversion of 4-diphosphocytidyl-2-C-methyl-D-erythritol 2-phosphate (CDP-ME2P) to 2-C-methyl-D-erythritol 2,4-cyclodiphosphate (ME-CPP) with a corresponding release of cytidine 5-monophosphate (CMP) (IspF). The polypeptide is Bifunctional enzyme IspD/IspF (Clavibacter michiganensis subsp. michiganensis (strain NCPPB 382)).